The following is a 313-amino-acid chain: Urease accessory protein UreD (313 aa).

The interval 1 to 30 is disordered; the sequence is MTDLSFPGQAASPGEGAGQTPSGGSGHRFD. Residues 15 to 26 are compositionally biased toward gly residues; the sequence is EGAGQTPSGGSG.

This sequence belongs to the UreD family. As to quaternary structure, ureD, UreF and UreG form a complex that acts as a GTP-hydrolysis-dependent molecular chaperone, activating the urease apoprotein by helping to assemble the nickel containing metallocenter of UreC. The UreE protein probably delivers the nickel.

It localises to the cytoplasm. Its function is as follows. Required for maturation of urease via the functional incorporation of the urease nickel metallocenter. The sequence is that of Urease accessory protein UreD from Chromohalobacter salexigens (strain ATCC BAA-138 / DSM 3043 / CIP 106854 / NCIMB 13768 / 1H11).